The chain runs to 609 residues: Elongation factor 4 (609 aa).

The 183-residue stretch at 5–187 (SKIRNFSIIA…AIVAKIPPPE (183 aa)) folds into the tr-type G domain. GTP is bound by residues 17-22 (DHGKST) and 134-137 (NKID).

This sequence belongs to the TRAFAC class translation factor GTPase superfamily. Classic translation factor GTPase family. LepA subfamily.

It localises to the cell inner membrane. It carries out the reaction GTP + H2O = GDP + phosphate + H(+). Functionally, required for accurate and efficient protein synthesis under certain stress conditions. May act as a fidelity factor of the translation reaction, by catalyzing a one-codon backward translocation of tRNAs on improperly translocated ribosomes. Back-translocation proceeds from a post-translocation (POST) complex to a pre-translocation (PRE) complex, thus giving elongation factor G a second chance to translocate the tRNAs correctly. Binds to ribosomes in a GTP-dependent manner. The polypeptide is Elongation factor 4 (Erythrobacter litoralis (strain HTCC2594)).